The following is a 302-amino-acid chain: Methionyl-tRNA formyltransferase (302 aa).

Residue 108 to 111 (SILP) participates in (6S)-5,6,7,8-tetrahydrofolate binding.

It belongs to the Fmt family.

It catalyses the reaction L-methionyl-tRNA(fMet) + (6R)-10-formyltetrahydrofolate = N-formyl-L-methionyl-tRNA(fMet) + (6S)-5,6,7,8-tetrahydrofolate + H(+). Functionally, attaches a formyl group to the free amino group of methionyl-tRNA(fMet). The formyl group appears to play a dual role in the initiator identity of N-formylmethionyl-tRNA by promoting its recognition by IF2 and preventing the misappropriation of this tRNA by the elongation apparatus. The protein is Methionyl-tRNA formyltransferase of Sulfurimonas denitrificans (strain ATCC 33889 / DSM 1251) (Thiomicrospira denitrificans (strain ATCC 33889 / DSM 1251)).